The sequence spans 645 residues: Transcription factor AN6788 (645 aa).

The interval 1–21 is disordered; that stretch reads MPQKAQPQPRESPFKPARQQP. The zn(2)-C6 fungal-type DNA-binding region spans 25-52; it reads CEECRKRKARCDRAKPQCGSCMMTGRVC. The span at 113–131 shows a compositional bias: basic and acidic residues; that stretch reads PDFEPNSHPRHSQSHDRRQ. Positions 113–170 are disordered; the sequence is PDFEPNSHPRHSQSHDRRQQSGPDSSPDTQHELPFLQSPPAARDADSAERALLPSPVS.

The protein localises to the nucleus. Its function is as follows. Transcription factors AN6788 and AN6790 act in tandem to regulate the expression of the non-reducing polyketide synthase pkfA from the aspernidine A biosynthesis cluster. They do not control the expression of the other genes involved in aspernidine A biosynthesis, nor do they regulate the expression of the highly reducing polyketide synthase AN6791 and the esterase AN6793 with which they are predicted to form a secondary metabolite biosynthesis cluster. The chain is Transcription factor AN6788 from Emericella nidulans (strain FGSC A4 / ATCC 38163 / CBS 112.46 / NRRL 194 / M139) (Aspergillus nidulans).